A 1179-amino-acid chain; its full sequence is ATP-dependent helicase/deoxyribonuclease subunit B (1179 aa).

The protein belongs to the helicase family. AddB/RexB type 2 subfamily. In terms of assembly, heterodimer of AddA and RexB. Requires Mg(2+) as cofactor.

In terms of biological role, the heterodimer acts as both an ATP-dependent DNA helicase and an ATP-dependent, dual-direction single-stranded exonuclease. Recognizes the chi site generating a DNA molecule suitable for the initiation of homologous recombination. This subunit has 5' -&gt; 3' nuclease activity but not helicase activity. In Lactobacillus delbrueckii subsp. bulgaricus (strain ATCC BAA-365 / Lb-18), this protein is ATP-dependent helicase/deoxyribonuclease subunit B.